Consider the following 32-residue polypeptide: uncharacterized protein (32 aa).

This is an uncharacterized protein from Haloarcula hispanica (His1V).